Here is a 967-residue protein sequence, read N- to C-terminus: Nonsense-mediated mRNA decay factor SMG8 (967 aa).

The tract at residues 627 to 702 is disordered; sequence LNEGEDADAD…SCPESQSVAS (76 aa). The span at 628-639 shows a compositional bias: acidic residues; it reads NEGEDADADADS. Residues 643-666 show a composition bias toward low complexity; the sequence is RSQICSSGQSSRSRSNSSSSDTSS. Over residues 686–702 the composition is skewed to polar residues; it reads ATEALSESCPESQSVAS.

The protein belongs to the SMG8 family.

Involved in nonsense-mediated decay (NMD) of mRNAs containing premature stop codons. Probable component of kinase complex containing nonC and recruited to stalled ribosomes. The sequence is that of Nonsense-mediated mRNA decay factor SMG8 from Drosophila mojavensis (Fruit fly).